Consider the following 313-residue polypeptide: Competence protein ComGA (313 aa).

138 to 145 contributes to the ATP binding site; it reads GPVGSGKT.

The protein belongs to the GSP E family.

The protein resides in the cell membrane. Functionally, required for uptake of DNA by competent cells. May be involved in assembly of a complex forming a transformation pilus at the surface of competent cells. This chain is Competence protein ComGA, found in Streptococcus pneumoniae (strain ATCC BAA-255 / R6).